The primary structure comprises 180 residues: NFWANSPFVLPKNEILAESEFAAPTITKLIPILFSTSGASLAYNVNLVADQFQRAFQTSTFCNRLYSFFNKRWFFDQVLNDFLVRSFLRFGYSVSFEALDKGAIEILGPYGISYTFRRLAERISQLQSGSVYHYAFAMLLGSTPFVTFSRMWDSLSSWVDSRSSFILLVSSFIINKSSQE.

The helical transmembrane segment at 131 to 148 (VYHYAFAMLLGSTPFVTF) threads the bilayer.

The protein belongs to the complex I subunit 5 family.

The protein localises to the mitochondrion inner membrane. The catalysed reaction is a ubiquinone + NADH + 5 H(+)(in) = a ubiquinol + NAD(+) + 4 H(+)(out). Core subunit of the mitochondrial membrane respiratory chain NADH dehydrogenase (Complex I) that is believed to belong to the minimal assembly required for catalysis. Complex I functions in the transfer of electrons from NADH to the respiratory chain. The immediate electron acceptor for the enzyme is believed to be ubiquinone. This chain is NADH-ubiquinone oxidoreductase chain 5 (ND5), found in Zea mays (Maize).